We begin with the raw amino-acid sequence, 275 residues long: Light-independent protochlorophyllide reductase iron-sulfur ATP-binding protein (275 aa).

Residues 10 to 15 (GIGKST) and Lys39 contribute to the ATP site. Ser14 contributes to the Mg(2+) binding site. Residues Cys95 and Cys129 each coordinate [4Fe-4S] cluster. Position 180-181 (180-181 (NR)) interacts with ATP.

This sequence belongs to the NifH/BchL/ChlL family. Homodimer. Protochlorophyllide reductase is composed of three subunits; ChlL, ChlN and ChlB. It depends on [4Fe-4S] cluster as a cofactor.

The catalysed reaction is chlorophyllide a + oxidized 2[4Fe-4S]-[ferredoxin] + 2 ADP + 2 phosphate = protochlorophyllide a + reduced 2[4Fe-4S]-[ferredoxin] + 2 ATP + 2 H2O. Its pathway is porphyrin-containing compound metabolism; chlorophyll biosynthesis (light-independent). In terms of biological role, component of the dark-operative protochlorophyllide reductase (DPOR) that uses Mg-ATP and reduced ferredoxin to reduce ring D of protochlorophyllide (Pchlide) to form chlorophyllide a (Chlide). This reaction is light-independent. The L component serves as a unique electron donor to the NB-component of the complex, and binds Mg-ATP. The chain is Light-independent protochlorophyllide reductase iron-sulfur ATP-binding protein from Gloeobacter violaceus (strain ATCC 29082 / PCC 7421).